Here is a 213-residue protein sequence, read N- to C-terminus: MKLVFLGPPGSGKGTIAKILSNELNYYHISTGDLFRTNIENDTPLGKEIKQIVENGQLVPDSITIKVVEDKINTIDNRDNFILDGFPRNINQAIELDRLLENIKIINFLIDEKLLVKRLSGRRICQSCCKIFNIYTLPTKEKEICDFCQGILYQRKDDTKESLKIRLQEYNLQTKPLINFYSNSNRLNNIDASKNINEVQKNLMEIISKIEKN.

Residue 10-15 coordinates ATP; sequence GSGKGT. The tract at residues 30-59 is NMP; it reads STGDLFRTNIENDTPLGKEIKQIVENGQLV. AMP-binding positions include threonine 31, arginine 36, 57–59, 85–88, and glutamine 92; these read QLV and GFPR. The segment at 121–158 is LID; the sequence is GRRICQSCCKIFNIYTLPTKEKEICDFCQGILYQRKDD. Residue arginine 122 participates in ATP binding. Residues cysteine 125 and cysteine 128 each contribute to the Zn(2+) site. Position 131–132 (131–132) interacts with ATP; the sequence is IF. Residues cysteine 145 and cysteine 148 each coordinate Zn(2+). Arginine 155 and arginine 166 together coordinate AMP. Lysine 194 serves as a coordination point for ATP.

The protein belongs to the adenylate kinase family. Monomer.

It is found in the cytoplasm. The catalysed reaction is AMP + ATP = 2 ADP. The protein operates within purine metabolism; AMP biosynthesis via salvage pathway; AMP from ADP: step 1/1. Its function is as follows. Catalyzes the reversible transfer of the terminal phosphate group between ATP and AMP. Plays an important role in cellular energy homeostasis and in adenine nucleotide metabolism. This Borrelia duttonii (strain Ly) protein is Adenylate kinase.